We begin with the raw amino-acid sequence, 359 residues long: UDP-2-acetamido-2-deoxy-3-oxo-D-glucuronate aminotransferase (359 aa).

Residues glycine 29, tyrosine 31, and serine 184 each coordinate UDP-2-acetamido-2-deoxy-alpha-D-ribo-hex-3-uluronate. Lysine 185 bears the N6-(pyridoxal phosphate)lysine mark. Positions 229, 308, and 309 each coordinate UDP-2-acetamido-2-deoxy-alpha-D-ribo-hex-3-uluronate.

It belongs to the DegT/DnrJ/EryC1 family. In terms of assembly, homodimer. Requires pyridoxal 5'-phosphate as cofactor.

The enzyme catalyses UDP-2-acetamido-2-deoxy-alpha-D-ribo-hex-3-uluronate + L-glutamate = UDP-2-acetamido-3-amino-2,3-dideoxy-alpha-D-glucuronate + 2-oxoglutarate. It functions in the pathway bacterial outer membrane biogenesis; LPS O-antigen biosynthesis. Functionally, plays a role in the biosynthesis of B-band O antigen for serotype O5. Catalyzes the amination of UDP-2-acetamido-2-deoxy-3-oxo-D-glucuronic acid (UDP-3-oxo-D-GlcNAcA) to UDP-2-acetamido-3-amino-2,3-dideoxy-D-glucuronic acid (UDP-GlcNAc3NA), using L-glutamate as the preferred amine donor. The polypeptide is UDP-2-acetamido-2-deoxy-3-oxo-D-glucuronate aminotransferase (Pseudomonas aeruginosa (strain ATCC 15692 / DSM 22644 / CIP 104116 / JCM 14847 / LMG 12228 / 1C / PRS 101 / PAO1)).